We begin with the raw amino-acid sequence, 92 residues long: Small ribosomal subunit protein uS19 (92 aa).

Belongs to the universal ribosomal protein uS19 family.

In terms of biological role, protein S19 forms a complex with S13 that binds strongly to the 16S ribosomal RNA. The sequence is that of Small ribosomal subunit protein uS19 from Cyanothece sp. (strain PCC 7425 / ATCC 29141).